Here is a 138-residue protein sequence, read N- to C-terminus: PTS system sorbose-specific EIIA component (138 aa).

The 125-residue stretch at M1–L125 folds into the PTS EIIA type-4 domain. The active-site Tele-phosphohistidine intermediate is the H8. Residue H8 is modified to Phosphohistidine; by HPr.

Its subcellular location is the cytoplasm. The phosphoenolpyruvate-dependent sugar phosphotransferase system (PTS), a major carbohydrate active transport system, catalyzes the phosphorylation of incoming sugar substrates concomitant with their translocation across the cell membrane. The enzyme II SorABCD PTS system is involved in L-sorbose transport. The protein is PTS system sorbose-specific EIIA component of Lacticaseibacillus casei (Lactobacillus casei).